A 201-amino-acid chain; its full sequence is Recombination protein RecR (201 aa).

A C4-type zinc finger spans residues 60–75; that stretch reads CSRCGNVDTVDPCTVC. The region spanning 83-178 is the Toprim domain; the sequence is SVIIVVEDVS…KITRLAHGVP (96 aa).

The protein belongs to the RecR family.

Functionally, may play a role in DNA repair. It seems to be involved in an RecBC-independent recombinational process of DNA repair. It may act with RecF and RecO. The protein is Recombination protein RecR of Rhizobium etli (strain ATCC 51251 / DSM 11541 / JCM 21823 / NBRC 15573 / CFN 42).